Consider the following 247-residue polypeptide: Terpene cyclase adrI (247 aa).

5 helical membrane-spanning segments follow: residues 20–40 (VAEF…FSML), 51–71 (TGIF…FIYP), 76–96 (HWEG…FFII), 112–132 (NLYF…YSFA), and 141–161 (FFYG…AQIL). Asn-164 is a glycosylation site (N-linked (GlcNAc...) asparagine). 2 helical membrane passes run 179-199 (FGGF…GPWF) and 205-225 (KFYI…YYVI).

The protein belongs to the paxB family.

It localises to the membrane. Its pathway is secondary metabolite biosynthesis; terpenoid biosynthesis. Functionally, terpene cyclase; part of the gene cluster that mediates the biosynthesis of andrastins, meroterpenoid compounds that exhibit inhibitory activity against ras farnesyltransferase, suggesting that they could be promising leads for antitumor agents. The first step of the pathway is the synthesis of 3,5-dimethylorsellinic acid (DMOA) by the polyketide synthase adrD via condensation of one acetyl-CoA starter unit with 3 malonyl-CoA units and 2 methylations. DMAO is then converted to farnesyl-DMAO by the prenyltransferase adrG. The methyltransferase adrK catalyzes the methylation of the carboxyl group of farnesyl-DMAO to farnesyl-DMAO methyl ester which is further converted to epoxyfarnesyl-DMAO methyl ester by the FAD-dependent monooxygenase adrH. The terpene cyclase adrI then catalyzes the carbon skeletal rearrangement to generate the andrastin E, the first compound in the pathway having the andrastin scaffold, with the tetracyclic ring system. The post-cyclization tailoring enzymes adrF, adrE, adrJ, and adrA, are involved in the conversion of andrastin E into andrastin A. The short chain dehydrogenase adrF is responsible for the oxidation of the C-3 a hydroxyl group of andrastin E to yield the corresponding ketone, andrastin D. The ketoreductase adrE stereoselectively reduces the carbonyl moiety to reverse the stereochemistry of the C-3 position to yield andrastin F. The acetyltransferase adrJ is the acetyltransferase that attaches the acetyl group to the C-3 hydroxyl group of andrastin F to yield andrastin C. Finally, the cytochrome P450 monooxygenase adrA catalyzes two sequential oxidation reactions of the C-23 methyl group, to generate the corresponding alcohol andrastin B, and aldehyde andrastin A. This chain is Terpene cyclase adrI, found in Penicillium rubens (strain ATCC 28089 / DSM 1075 / NRRL 1951 / Wisconsin 54-1255) (Penicillium chrysogenum).